Consider the following 121-residue polypeptide: Group 1 truncated hemoglobin (121 aa).

Position 1 is an N-acetylmethionine (methionine 1). Position 73 (histidine 73) interacts with heme.

This sequence belongs to the truncated hemoglobin family. Group I subfamily. As to quaternary structure, monomer. Heme is required as a cofactor.

This is Group 1 truncated hemoglobin from Tetrahymena pyriformis.